The following is a 65-amino-acid chain: Large ribosomal subunit protein bL35 (65 aa).

It belongs to the bacterial ribosomal protein bL35 family.

The chain is Large ribosomal subunit protein bL35 from Buchnera aphidicola subsp. Cinara cedri (strain Cc).